The following is a 642-amino-acid chain: Nucleolar GTP-binding protein 1 (642 aa).

Residues 168 to 340 (RTLLICGYPN…VRNKACEKLL (173 aa)) form the OBG-type G domain. GTP-binding positions include 174 to 181 (GYPNVGKS), 220 to 224 (DTPGI), and 288 to 291 (NKTD). The interval 585–642 (MDGVADASMRSKADRMAKLHRRERNRQARQGEADRHATASLPKHLFSGKRGIGSNDRR) is disordered. The span at 609-621 (NRQARQGEADRHA) shows a compositional bias: basic and acidic residues.

This sequence belongs to the TRAFAC class OBG-HflX-like GTPase superfamily. OBG GTPase family. NOG subfamily.

It is found in the nucleus. It localises to the nucleolus. Functionally, involved in the biogenesis of the 60S ribosomal subunit. The protein is Nucleolar GTP-binding protein 1 (NOG1) of Eremothecium gossypii (strain ATCC 10895 / CBS 109.51 / FGSC 9923 / NRRL Y-1056) (Yeast).